The following is a 243-amino-acid chain: DNA repair protein RecO (243 aa).

The protein belongs to the RecO family.

In terms of biological role, involved in DNA repair and RecF pathway recombination. This Xylella fastidiosa (strain M23) protein is DNA repair protein RecO.